The following is a 648-amino-acid chain: Indolepyruvate oxidoreductase subunit IorA (648 aa).

4Fe-4S ferredoxin-type domains lie at 585–614 (PIYQVNEEKCTGCKICINAYGCPAIYWDAE) and 616–645 (KKARVDPLMCWGCGGCAQVCPFGAFEKVRE). Positions 594, 597, 600, 606, 625, 628, 631, and 635 each coordinate [4Fe-4S] cluster.

As to quaternary structure, heterodimer of the IorA and IorB subunits. [4Fe-4S] cluster serves as cofactor.

The catalysed reaction is indole-3-pyruvate + 2 oxidized [2Fe-2S]-[ferredoxin] + CoA = (indol-3-yl)acetyl-CoA + 2 reduced [2Fe-2S]-[ferredoxin] + CO2 + H(+). In terms of biological role, catalyzes the ferredoxin-dependent oxidative decarboxylation of arylpyruvates. The sequence is that of Indolepyruvate oxidoreductase subunit IorA (iorA) from Pyrococcus horikoshii (strain ATCC 700860 / DSM 12428 / JCM 9974 / NBRC 100139 / OT-3).